The chain runs to 175 residues: Avenin-like a7 (175 aa).

An N-terminal signal peptide occupies residues 1–19 (MKTMFILALLAFTATSAVA).

Belongs to the prolamin family. Contains 7 disulfide bonds.

Its function is as follows. Seed storage protein. Not integrated in the gluten polymer through disulfide bonds, unless incorporated by reduction and reoxidation during dough making. Increases dough strength and bread volume, but decreases dough stability when added into a base wheat flour. This is Avenin-like a7 from Triticum aestivum (Wheat).